Consider the following 349-residue polypeptide: Protein RecA (349 aa).

65–72 (GPESSGKT) is a binding site for ATP.

This sequence belongs to the RecA family.

It localises to the cytoplasm. In terms of biological role, can catalyze the hydrolysis of ATP in the presence of single-stranded DNA, the ATP-dependent uptake of single-stranded DNA by duplex DNA, and the ATP-dependent hybridization of homologous single-stranded DNAs. It interacts with LexA causing its activation and leading to its autocatalytic cleavage. This chain is Protein RecA, found in Aliarcobacter butzleri (strain RM4018) (Arcobacter butzleri).